A 199-amino-acid polypeptide reads, in one-letter code: uncharacterized protein (199 aa).

A coiled-coil region spans residues 71 to 104; sequence RANATNKLTVIAEQIQHLQEQARKVLEDARRDAD.

This is an uncharacterized protein from Mus musculus (Mouse).